Consider the following 294-residue polypeptide: Elongation factor Ts (294 aa).

The tract at residues 79–82 is involved in Mg(2+) ion dislocation from EF-Tu; that stretch reads TDFV.

This sequence belongs to the EF-Ts family.

The protein resides in the cytoplasm. Its function is as follows. Associates with the EF-Tu.GDP complex and induces the exchange of GDP to GTP. It remains bound to the aminoacyl-tRNA.EF-Tu.GTP complex up to the GTP hydrolysis stage on the ribosome. The polypeptide is Elongation factor Ts (tsf) (Geobacillus kaustophilus (strain HTA426)).